A 334-amino-acid polypeptide reads, in one-letter code: Malate dehydrogenase 2 (334 aa).

Gly12–Ala18 serves as a coordination point for NAD(+). Substrate is bound by residues Arg93 and Arg99. NAD(+) contacts are provided by residues Asn106, Gln113, and Val130 to Asn132. Substrate is bound by residues Asn132 and Arg166. His191 acts as the Proton acceptor in catalysis.

The protein belongs to the LDH/MDH superfamily. MDH type 2 family.

The enzyme catalyses (S)-malate + NAD(+) = oxaloacetate + NADH + H(+). Functionally, catalyzes the reversible oxidation of malate to oxaloacetate. The sequence is that of Malate dehydrogenase 2 from Albidiferax ferrireducens (strain ATCC BAA-621 / DSM 15236 / T118) (Rhodoferax ferrireducens).